A 224-amino-acid chain; its full sequence is MNILIFGPPGSGKSTHSRTITERYGLTYISSGDMIRAEIEKGSELGKELKKYLAKGELIPDIVVNTLVISRLRRDRNNFIIDGYPRTAEQVLALENYLYDHGIRIDVAMEIFISKEESVERISGRRICPKCGAVYHLRYRPPKVPGKCDLCGSQLIQREDDRSEIVAKRYDLYVKNMEPIIKFYKKQGIYVRVDGHGSINEVWERIRPLLDYIHNREKKRKENE.

10–15 (GSGKST) is an ATP binding site. The tract at residues 30 to 59 (SSGDMIRAEIEKGSELGKELKKYLAKGELI) is NMP. Residues serine 31, arginine 36, 57-59 (ELI), 83-86 (GYPR), and glutamine 90 contribute to the AMP site. The interval 124–161 (GRRICPKCGAVYHLRYRPPKVPGKCDLCGSQLIQREDD) is LID. An ATP-binding site is contributed by arginine 125. 2 residues coordinate Zn(2+): cysteine 128 and cysteine 131. Position 134 to 135 (134 to 135 (VY)) interacts with ATP. The Zn(2+) site is built by cysteine 148 and cysteine 151. The AMP site is built by arginine 158 and arginine 169. Glycine 197 is an ATP binding site.

It belongs to the adenylate kinase family. In terms of assembly, monomer.

The protein localises to the cytoplasm. The enzyme catalyses AMP + ATP = 2 ADP. The protein operates within purine metabolism; AMP biosynthesis via salvage pathway; AMP from ADP: step 1/1. Functionally, catalyzes the reversible transfer of the terminal phosphate group between ATP and AMP. Plays an important role in cellular energy homeostasis and in adenine nucleotide metabolism. The protein is Adenylate kinase of Thermococcus onnurineus (strain NA1).